Reading from the N-terminus, the 837-residue chain is Tuftelin-interacting protein 11 (837 aa).

Composition is skewed to basic and acidic residues over residues 1-13 (MSLS…GEGH) and 44-64 (QTKE…EERP). Disordered stretches follow at residues 1 to 21 (MSLS…DDER), 34 to 73 (EFNP…RARD), and 85 to 135 (LKKG…FAGG). The interval 1–50 (MSLSHLYRDGEGHLDDDDDERENFEITDWDLQNEFNPNRQRHWQTKEEAT) is required for interaction with DHX15. Phosphoserine is present on residues S2, S59, S95, and S98. The segment covering 91 to 100 (EEADSEDSDA) has biased composition (acidic residues). Over residues 101–116 (EEKPVKQEDFPKDLGP) the composition is skewed to basic and acidic residues. A Phosphoserine modification is found at S144. The 47-residue stretch at 149–195 (TKGIGQKLLQKMGYVPGRGLGKNAQGIINPIEAKQRKGKGAVGAYGS) folds into the G-patch domain. The segment at 183–236 (QRKGKGAVGAYGSERTTQSLQDFPVADSEEEAEEEFQKELSQWRKDPSGSKKKP) is disordered. Residue S210 is modified to Phosphoserine. Residues 217–231 (EFQKELSQWRKDPSG) show a composition bias toward basic and acidic residues. Residues 700 to 705 (VKDKFN) carry the Nuclear localization signal motif. Residues 710 to 734 (IMNRAVSSNVGAYMQPGARENIAYL) are required for nuclear speckle localization.

The protein belongs to the TFP11/STIP family. In terms of assembly, identified in the spliceosome C complex. Found in the Intron Large (IL) complex, a post-mRNA release spliceosomal complex containing the excised intron, U2, U5 and U6 snRNPs, and splicing factors. Interacts with TUFT1. Interacts with DHX15; indicative for a recruitment of DHX15 to the IL complex. Interacts with GCFC2.

It is found in the cytoplasm. It localises to the nucleus. In terms of biological role, involved in pre-mRNA splicing, specifically in spliceosome disassembly during late-stage splicing events. Intron turnover seems to proceed through reactions in two lariat-intron associated complexes termed Intron Large (IL) and Intron Small (IS). In cooperation with DHX15 seems to mediate the transition of the U2, U5 and U6 snRNP-containing IL complex to the snRNP-free IS complex leading to efficient debranching and turnover of excised introns. May play a role in the differentiation of ameloblasts and odontoblasts or in the forming of the enamel extracellular matrix. This chain is Tuftelin-interacting protein 11 (Tfip11), found in Rattus norvegicus (Rat).